Reading from the N-terminus, the 439-residue chain is uncharacterized protein (439 aa).

The YcaO domain occupies G116–E439.

This is an uncharacterized protein from Mycobacterium tuberculosis (strain CDC 1551 / Oshkosh).